Here is a 184-residue protein sequence, read N- to C-terminus: MNWRSEHIWIELITGSRKISNFCWACILFLGSLGFLLVGTSSYFGRNLISLFPSQQIVFFPQGIVMCFYGIAGLFISSYLWCTISWSVGSGYDKFDRKEGIVCIFRWGFPGRNRRIFFRFRIRDIRSIRIEVKEGLFPRRVLYMEIGGRGDIPLTRTDENLTPREIEQKAAESAYFLRVPIEVF.

2 helical membrane-spanning segments follow: residues 19 to 39 and 57 to 77; these read ISNF…LLVG and IVFF…LFIS.

It belongs to the Ycf4 family.

It is found in the plastid. It localises to the chloroplast thylakoid membrane. Its function is as follows. Seems to be required for the assembly of the photosystem I complex. This is Photosystem I assembly protein Ycf4 from Nymphaea alba (White water-lily).